The chain runs to 346 residues: MGENLPLLLSAALGKKVNRPPVWMMRQAGRYMKIYRDLRERYPSFRERSENPELSYQISMQPFKAFKPDGVILFSDILTPLPGMGINFEIIESKGPIIENPIKNIHQIENLKELVPSESLSFVGEVLSSLKKDVNNEATVLGFVGAPWTLAAYVVEGKSSKNYSLIKSMAFKEPDLLHKLLDHFAKSIGEYLKYQIKSGAQVVQIFDSWAGQLSPQDYDIFAGPYQKKVVDIVKEKYPETPIILYISGSAGLLERMARTGVDIISLDWTVDIEEACKRIPEGIGIQGNVDPGLLFGNKESIKERIDITFNKSKGRKYILNLGHGILPGTPEENAQTFFEHGKKLTY.

Residues 26-30 (RQAGR), aspartate 76, tyrosine 153, serine 208, and histidine 323 each bind substrate.

Belongs to the uroporphyrinogen decarboxylase family. As to quaternary structure, homodimer.

The protein localises to the cytoplasm. It catalyses the reaction uroporphyrinogen III + 4 H(+) = coproporphyrinogen III + 4 CO2. It participates in porphyrin-containing compound metabolism; protoporphyrin-IX biosynthesis; coproporphyrinogen-III from 5-aminolevulinate: step 4/4. In terms of biological role, catalyzes the decarboxylation of four acetate groups of uroporphyrinogen-III to yield coproporphyrinogen-III. In Prochlorococcus marinus (strain MIT 9515), this protein is Uroporphyrinogen decarboxylase.